The following is a 977-amino-acid chain: MTIQAHKRTLSEVSTSSVGQLKRREGYTEDYTDEGSDIDMPEYVTDSANNQQWQDTISRVVQSVVSVHFAQVAPFDCESALVSEATGFVVDAKLGIILTNRHVVGAGPFSGYAVFDNHEECDVIPIYRDPVHDFGFLKFDPSTIKYMNVQALELKPALAKVGSEIRVVGNDAGEKLSILAGFISRVDRNAPDYGELTYNDFNTEYIQAAAAASGGSSGSPVVNIDGYAVALQAGGSTEASTDFFLPLDRILRALRCIQGSQPITRGTIQTQWLLKPYDECRRMGLSPESEAKAREQFPGKIGLLVAETILREGPADKSIKEGDILISINGQMICSFIQVDAILDENVGKPITLVVQRSGIDITVECTVGDLHAITPSRYVEVCGATFNELSYQMARYYAIPVRAVFLSSATGSFCFDTKEKLGWIVDEVNNQPTPTLDTFIEVMSTIPDCSRVTVQYHHLVDQHSPHVTTVYIDRHWCNEFRIFERNDETGIWDYKNLADPIPALPLKPQTAKFIDLPISNPKLARLARMLVMVSTIGPVPLDSVDPEPRKAAGLVLDAKQGYVIVSRRIVPHDCMDVFVTIAESVLVPASVVFLHPTQNYVIVKYDPAQVQAAVETPILSTERLKRGDKVQFVGYTHNFRSVSSETTVTDISSLSIPSNMVPRYRATNLEAISIESSVGSRCHSGILADDDGTVRALWLSFLGEKQDEKDKIYLMGLDLVDIGEVVEVLKKGKIPRVNIVDSGFGSISVLQARLRGVPEEWIKRMESESENRLQFITVTRVSYTDEEQKLVSGDIILSVNDQLVKQMRDLEGIVTTTDVPAVQQVLRFKIVRKGSIMDLDIKTIEVEETSKIVIFAGCILQAPHHAVRQAMLNIPSGVYCTFRGQSSPAIQYGISSTNFITHVNEIETPDLDRFLEVVRTIPDNTYCKIRLVTFDNVPFAISLKTNYHYFPTSELSRNSDTGRWIEHLCNATPAKN.

The tract at residues 1 to 36 (MTIQAHKRTLSEVSTSSVGQLKRREGYTEDYTDEGS) is disordered. The segment at 64–254 (VVSVHFAQVA…LPLDRILRAL (191 aa)) is serine protease. Active-site charge relay system residues include H102, D133, and S216. PDZ domains follow at residues 271 to 356 (QWLL…LVVQ) and 749 to 835 (SVLQ…VRKG).

The protein belongs to the peptidase S1C family.

Its subcellular location is the nucleus. Nuclear serine protease which mediates apoptosis. In Eremothecium gossypii (strain ATCC 10895 / CBS 109.51 / FGSC 9923 / NRRL Y-1056) (Yeast), this protein is Pro-apoptotic serine protease NMA111 (NMA111).